The chain runs to 151 residues: UPF0756 membrane protein GWCH70_2680 (151 aa).

A run of 4 helical transmembrane segments spans residues 5 to 25 (ILFLLILFIIGFIAKNQSLMI), 53 to 73 (WGVTVITIAVLAPIATGEIGF), 86 to 106 (WIALLSGIFVALVAKGGVTLL), and 116 to 136 (LVFGTIIAVSLFHGVAVGPLI).

This sequence belongs to the UPF0756 family.

It localises to the cell membrane. This is UPF0756 membrane protein GWCH70_2680 from Geobacillus sp. (strain WCH70).